Consider the following 177-residue polypeptide: Large ribosomal subunit protein uL10 (177 aa).

This sequence belongs to the universal ribosomal protein uL10 family. As to quaternary structure, part of the ribosomal stalk of the 50S ribosomal subunit. The N-terminus interacts with L11 and the large rRNA to form the base of the stalk. The C-terminus forms an elongated spine to which L12 dimers bind in a sequential fashion forming a multimeric L10(L12)X complex.

Forms part of the ribosomal stalk, playing a central role in the interaction of the ribosome with GTP-bound translation factors. The chain is Large ribosomal subunit protein uL10 from Legionella pneumophila (strain Paris).